The following is a 79-amino-acid chain: Small ribosomal subunit protein bS18 (79 aa).

It belongs to the bacterial ribosomal protein bS18 family. In terms of assembly, part of the 30S ribosomal subunit. Forms a tight heterodimer with protein bS6.

Functionally, binds as a heterodimer with protein bS6 to the central domain of the 16S rRNA, where it helps stabilize the platform of the 30S subunit. This chain is Small ribosomal subunit protein bS18, found in Bradyrhizobium sp. (strain BTAi1 / ATCC BAA-1182).